A 571-amino-acid chain; its full sequence is Isocitrate dehydrogenase kinase/phosphatase 2 (571 aa).

ATP is bound by residues 313 to 319 and Lys334; that span reads APGTPGM. Asp369 is an active-site residue.

Belongs to the AceK family.

The protein resides in the cytoplasm. The catalysed reaction is L-seryl-[isocitrate dehydrogenase] + ATP = O-phospho-L-seryl-[isocitrate dehydrogenase] + ADP + H(+). Bifunctional enzyme which can phosphorylate or dephosphorylate isocitrate dehydrogenase (IDH) on a specific serine residue. This is a regulatory mechanism which enables bacteria to bypass the Krebs cycle via the glyoxylate shunt in response to the source of carbon. When bacteria are grown on glucose, IDH is fully active and unphosphorylated, but when grown on acetate or ethanol, the activity of IDH declines drastically concomitant with its phosphorylation. In Pseudoalteromonas translucida (strain TAC 125), this protein is Isocitrate dehydrogenase kinase/phosphatase 2.